Reading from the N-terminus, the 294-residue chain is MTADRPALRTGDGETRLSFGSNLSSFTEYLRGHAPELLPENRIGHRSHSTRGGDGMESGDLAPHGTTIVALTYKGGVLLAGDRRATQGNLIASRDVEKVYVTDEYSAAGIAGTAGIAIELVRLFAVELEHYEKIEGVQLTFDGKANRLASMVRGNLGAAMQGLAVVPLLVGYDLDADDEAHAGRIVSYDVVGGRYEERAGYHAVGSGSLFAKSALKKIYSPDSDEETALRAAIESLYDAADDDSATGGPDLTRGIYPTAVTITQAGAVHVSEETTSELARRIVAERTEEGGSAR.

The propeptide at 1–65 (MTADRPALRT…MESGDLAPHG (65 aa)) is removed in mature form; by autocatalysis. Thr-66 (nucleophile) is an active-site residue.

This sequence belongs to the peptidase T1B family. The 20S proteasome core is composed of 14 alpha and 14 beta subunits that assemble into four stacked heptameric rings, resulting in a barrel-shaped structure. The two inner rings, each composed of seven catalytic beta subunits, are sandwiched by two outer rings, each composed of seven alpha subunits. The catalytic chamber with the active sites is on the inside of the barrel. Has a gated structure, the ends of the cylinder being occluded by the N-termini of the alpha-subunits. Is capped by the proteasome-associated ATPase, ARC.

It localises to the cytoplasm. It carries out the reaction Cleavage of peptide bonds with very broad specificity.. It functions in the pathway protein degradation; proteasomal Pup-dependent pathway. Its activity is regulated as follows. The formation of the proteasomal ATPase ARC-20S proteasome complex, likely via the docking of the C-termini of ARC into the intersubunit pockets in the alpha-rings, may trigger opening of the gate for substrate entry. Interconversion between the open-gate and close-gate conformations leads to a dynamic regulation of the 20S proteasome proteolysis activity. Component of the proteasome core, a large protease complex with broad specificity involved in protein degradation. The chain is Proteasome subunit beta from Rhodococcus jostii (strain RHA1).